The sequence spans 352 residues: Sodium-lithium/proton antiporter (352 aa).

Helical transmembrane passes span 11–31 (ILLL…PVSV), 32–52 (PLII…WMQF), 61–81 (AVTI…TYAV), 159–179 (IPEY…FMLE), 216–236 (AQFL…FWIT), 241–261 (IVMS…SIVI), 271–291 (IVGD…LLAI), and 317–337 (IGLQ…VIAF).

It belongs to the autoinducer-2 exporter (AI-2E) (TC 2.A.86) family.

It localises to the cell membrane. Its function is as follows. Catalyzes the pH-dependent efflux of sodium and lithium in exchange for external protons. The chain is Sodium-lithium/proton antiporter from Halobacillus andaensis.